Consider the following 177-residue polypeptide: Transcription antitermination protein NusB (177 aa).

The tract at residues 1–35 (MTDSANPTPSARPPRQPRTGTTGTGARKAGSKSGR) is disordered. The segment covering 17–28 (PRTGTTGTGARK) has biased composition (low complexity).

This sequence belongs to the NusB family.

Its function is as follows. Involved in transcription antitermination. Required for transcription of ribosomal RNA (rRNA) genes. Binds specifically to the boxA antiterminator sequence of the ribosomal RNA (rrn) operons. The sequence is that of Transcription antitermination protein NusB from Acidovorax ebreus (strain TPSY) (Diaphorobacter sp. (strain TPSY)).